A 303-amino-acid chain; its full sequence is 3-methyl-2-oxobutanoate hydroxymethyltransferase (303 aa).

A compositionally biased stretch (polar residues) spans 1 to 10 (MDSSGTVRNQ). The segment at 1–41 (MDSSGTVRNQTSDDHSRPADAAGTAATLYGAPAETRSPRRS) is disordered. Mg(2+)-binding residues include Asp84 and Asp123. 3-methyl-2-oxobutanoate contacts are provided by residues 84 to 85 (DS), Asp123, and Lys153. Residue Glu155 coordinates Mg(2+). Catalysis depends on Glu221, which acts as the Proton acceptor.

This sequence belongs to the PanB family. Homodecamer; pentamer of dimers. Mg(2+) serves as cofactor.

Its subcellular location is the cytoplasm. The catalysed reaction is 3-methyl-2-oxobutanoate + (6R)-5,10-methylene-5,6,7,8-tetrahydrofolate + H2O = 2-dehydropantoate + (6S)-5,6,7,8-tetrahydrofolate. It functions in the pathway cofactor biosynthesis; (R)-pantothenate biosynthesis; (R)-pantoate from 3-methyl-2-oxobutanoate: step 1/2. Its function is as follows. Catalyzes the reversible reaction in which hydroxymethyl group from 5,10-methylenetetrahydrofolate is transferred onto alpha-ketoisovalerate to form ketopantoate. The chain is 3-methyl-2-oxobutanoate hydroxymethyltransferase from Frankia alni (strain DSM 45986 / CECT 9034 / ACN14a).